The primary structure comprises 81 residues: Protein RALF-like 6 (81 aa).

Residues 1-29 (MAAHKKSHIRIFFVSVMIILSLFSGFGEG) form the signal peptide. Disulfide bonds link C46–C54 and C66–C72.

This sequence belongs to the plant rapid alkalinization factor (RALF) family.

Its subcellular location is the secreted. Its function is as follows. Cell signaling peptide that may regulate plant stress, growth, and development. Mediates a rapid alkalinization of extracellular space by mediating a transient increase in the cytoplasmic Ca(2+) concentration leading to a calcium-dependent signaling events through a cell surface receptor and a concomitant activation of some intracellular mitogen-activated protein kinases. In Arabidopsis thaliana (Mouse-ear cress), this protein is Protein RALF-like 6 (RALFL6).